The following is a 469-amino-acid chain: UDP-N-acetylmuramoylalanine--D-glutamate ligase (469 aa).

123–129 (GTNGKST) provides a ligand contact to ATP.

It belongs to the MurCDEF family.

The protein localises to the cytoplasm. The enzyme catalyses UDP-N-acetyl-alpha-D-muramoyl-L-alanine + D-glutamate + ATP = UDP-N-acetyl-alpha-D-muramoyl-L-alanyl-D-glutamate + ADP + phosphate + H(+). The protein operates within cell wall biogenesis; peptidoglycan biosynthesis. Cell wall formation. Catalyzes the addition of glutamate to the nucleotide precursor UDP-N-acetylmuramoyl-L-alanine (UMA). This Phenylobacterium zucineum (strain HLK1) protein is UDP-N-acetylmuramoylalanine--D-glutamate ligase.